Consider the following 230-residue polypeptide: Ubiquitin carboxyl-terminal hydrolase isozyme L3 (230 aa).

In terms of domain architecture, UCH catalytic spans 5–229 (RWLPLEANPE…LRFNAIALSA (225 aa)). Positions 8–13 (PLEANP) are interaction with ubiquitin. The active-site Nucleophile is the cysteine 95. Serine 130 carries the post-translational modification Phosphoserine. Positions 152–159 (AHEGQTEA) are interaction with ubiquitin. Crossover loop which restricts access of large ubiquitin adducts to the active site. Catalysis depends on histidine 169, which acts as the Proton donor. Positions 219 to 224 (ELRFNA) are interaction with ubiquitin.

It belongs to the peptidase C12 family. As to quaternary structure, preferentially binds diubiquitin; the interaction does not hydrolyze diubiquitin but, in vitro, inhibits the hydrolyzing activity on other substrates. As to expression, ubiquitously expressed, with highest levels in brain, liver, heart, thymus, kidney and testis. Highly expressed in the cauda epididymidis, in meiotic pachytene spermatocytes and post-meiotic spematids. In the retina, enriched in the photoreceptor inner segment.

It localises to the cytoplasm. It catalyses the reaction Thiol-dependent hydrolysis of ester, thioester, amide, peptide and isopeptide bonds formed by the C-terminal Gly of ubiquitin (a 76-residue protein attached to proteins as an intracellular targeting signal).. Its activity is regulated as follows. Inhibited by monoubiquitin and diubiquitin. Deubiquitinating enzyme (DUB) that controls levels of cellular ubiquitin through processing of ubiquitin precursors and ubiquitinated proteins. Thiol protease that recognizes and hydrolyzes a peptide bond at the C-terminal glycine of either ubiquitin or NEDD8. Has a 10-fold preference for Arg and Lys at position P3'', and exhibits a preference towards 'Lys-48'-linked ubiquitin chains. Deubiquitinates ENAC in apical compartments, thereby regulating apical membrane recycling. Indirectly increases the phosphorylation of IGFIR, AKT and FOXO1 and promotes insulin-signaling and insulin-induced adipogenesis. Required for stress-response retinal, skeletal muscle and germ cell maintenance. May be involved in working memory. Can hydrolyze UBB(+1), a mutated form of ubiquitin which is not effectively degraded by the proteasome. The sequence is that of Ubiquitin carboxyl-terminal hydrolase isozyme L3 (Uchl3) from Mus musculus (Mouse).